We begin with the raw amino-acid sequence, 80 residues long: Conotoxin PnMKLT1-0121 (80 aa).

Positions 1–22 (MKLTCMMIVAVLFLTAWTFATA) are cleaved as a signal peptide. Positions 23-49 (DDPRNRLENFFSKTQHEMKNPEASKLN) are excised as a propeptide. Disulfide bonds link C52–C67, C59–C71, and C66–C75.

This sequence belongs to the conotoxin O1 superfamily. In terms of tissue distribution, expressed by the venom duct.

Its subcellular location is the secreted. This chain is Conotoxin PnMKLT1-0121, found in Conus pennaceus (Feathered cone).